We begin with the raw amino-acid sequence, 514 residues long: Polygalacturonase (514 aa).

A signal peptide spans 1 to 22 (MAMKFIAPMAFVAMQLIIMAAA). Positions 23 to 45 (EDQSAQIMLDSDIEQYLRSNRSL) are excised as a propeptide. PbH1 repeat units lie at residues 214–240 (CEGV…DIFA), 241–262 (SKNF…AIGT), 264–284 (SSNI…SIGS), 294–315 (VSYV…RIKT), and 323–344 (ASHI…LINQ). The Proton donor role is filled by aspartate 255. Histidine 278 is an active-site residue. Residues 434 to 514 (AKRKESKSHK…CSRHGKIYHP (81 aa)) constitute a propeptide that is removed on maturation. N-linked (GlcNAc...) asparagine glycosylation is found at asparagine 460 and asparagine 472.

Belongs to the glycosyl hydrolase 28 family.

It localises to the secreted. It is found in the plastid. The protein localises to the amyloplast. Its subcellular location is the cell wall. It catalyses the reaction (1,4-alpha-D-galacturonosyl)n+m + H2O = (1,4-alpha-D-galacturonosyl)n + (1,4-alpha-D-galacturonosyl)m.. This chain is Polygalacturonase, found in Cryptomeria japonica (Japanese cedar).